We begin with the raw amino-acid sequence, 370 residues long: DNA primase small subunit PriS (370 aa).

Catalysis depends on residues aspartate 92, aspartate 94, and aspartate 272.

The protein belongs to the eukaryotic-type primase small subunit family. As to quaternary structure, heterodimer of a small subunit (PriS) and a large subunit (PriL). The cofactor is Mg(2+). It depends on Mn(2+) as a cofactor.

Functionally, catalytic subunit of DNA primase, an RNA polymerase that catalyzes the synthesis of short RNA molecules used as primers for DNA polymerase during DNA replication. The small subunit contains the primase catalytic core and has DNA synthesis activity on its own. Binding to the large subunit stabilizes and modulates the activity, increasing the rate of DNA synthesis while decreasing the length of the DNA fragments, and conferring RNA synthesis capability. The DNA polymerase activity may enable DNA primase to also catalyze primer extension after primer synthesis. May also play a role in DNA repair. The sequence is that of DNA primase small subunit PriS from Picrophilus torridus (strain ATCC 700027 / DSM 9790 / JCM 10055 / NBRC 100828 / KAW 2/3).